Here is a 445-residue protein sequence, read N- to C-terminus: Protein trichome berefringence-like 7 (445 aa).

The chain crosses the membrane as a helical; Signal-anchor for type II membrane protein span at residues 69 to 89 (IIAGTIVSFLVIIAGGYLYVV). The GDS motif motif lies at 188–190 (GDS). The DCXHWCLPGXXDXWN motif motif lies at 418 to 432 (DCSHWCLPGVPDIWN).

It belongs to the PC-esterase family. TBL subfamily.

The protein resides in the membrane. In terms of biological role, may act as a bridging protein that binds pectin and other cell wall polysaccharides. Probably involved in maintaining esterification of pectins. May be involved in the specific O-acetylation of cell wall polymers. In Arabidopsis thaliana (Mouse-ear cress), this protein is Protein trichome berefringence-like 7 (TBL7).